We begin with the raw amino-acid sequence, 278 residues long: MKFGKSLSSQIVEMQPEWRDNFLSYKDLKKRLNLISGGAAGERASKRRRVGGATAVTVTAAAAGGMTLEQAGFVGLLDAELDKFNFFFLEKEEEYVIKQKELRERKMASAEEVMRVRKEIVDLHGEMVLLENYSALNYTGLVKILKKYDKRTGSMIRLPFVQKVLQQPFFTTDLLYKLVKECEEMLDQLMPTNEHSVASEDGKDDSEGEEKGSKPSSSSSANGGAVPGEAEDERSTDMKSTVTAALRALREIRSGSSTVSVFSLPPLHGSNGQDEPGR.

An SPX domain is found at methionine 1–glutamine 162. 2 disordered regions span residues proline 191–valine 242 and glycine 255–arginine 278.

Interacts (via SPX domain) with PHR2 (via C-terminus). Interacts with RLI1 in the nucleus to prevents its positive regulation of leaf inclination during phosphate (Pi) starvation.

The protein localises to the nucleus. Inhibits PHR2 DNA-binding activity via a phosphate (Pi)-dependent protein interaction. Together with SPX1, plays a negative role in the regulation of leaf inclination by preventing RLI1 transcription factor activity in Pi depleted conditions. This chain is SPX domain-containing protein 2, found in Oryza sativa subsp. indica (Rice).